The chain runs to 348 residues: MMEEQLIPIQWKDDALVLLDQTLLPNEIVYESFKTAESVWDAIQVMKVRGAPVIGVSAAYGVYLGVKEFAESTEEGFMDEVRKVCTYLATSRPTAVNLFWALERMESVAADNIHLSISQLKDRLLEEAKEIHREDEEINRQIGEHALTLFHDGMGVLTHCNAGALATTKYGTATAPMYLAKEKGWDLKIFSDETRPRLQGSTLTALELQRAGIDVTVITDNMAAMVMSQGKIDAVIVGCDRVAANGDIANKIGTLGVSILAKYYNIPFYVAAPTPTIDLKTPTGKEIPIEERDASEVINRFGQYSAPKESKVYNPAFDVTPHENVTAIITEKGIVKAPFTENLKKIFQ.

Residues 49–51 (RGA), arginine 92, and glutamine 199 contribute to the substrate site. Aspartate 240 acts as the Proton donor in catalysis. 250-251 (NK) is a substrate binding site.

Belongs to the EIF-2B alpha/beta/delta subunits family. DrdI subfamily. As to quaternary structure, homodimer.

The catalysed reaction is 5-deoxy-alpha-D-ribose 1-phosphate = 5-deoxy-D-ribulose 1-phosphate. It carries out the reaction 5-(methylsulfanyl)-alpha-D-ribose 1-phosphate = 5-(methylsulfanyl)-D-ribulose 1-phosphate. Its pathway is carbohydrate degradation. Its function is as follows. Catalyzes the isomerization of 5-deoxy-alpha-D-ribose 1-phosphate to 5-deoxy-D-ribulose 1-phosphate, as part of a 5-deoxyribose salvage pathway that recycles this toxic radical SAM enzyme by-product to mainstream metabolites. Also seems to be able to catalyze the conversion of methylthioribose-1-phosphate (MTR-1-P) into methylthioribulose-1-phosphate (MTRu-1-P). However this enzyme may not function in methionine salvage in B.thuringiensis since it exists a paralog (MtnA) present in the methionine salvage pathway cluster. The protein is 5-deoxyribose 1-phosphate isomerase of Bacillus thuringiensis serovar kurstaki (strain ATCC 35866 / NRRL B-4488 / HD73).